Reading from the N-terminus, the 531-residue chain is Transcription factor LG2 (531 aa).

2 disordered regions span residues 115–154 and 195–220; these read RHQQ…ASSA and LHGG…KLVD. Residues 116–154 show a composition bias toward polar residues; that stretch reads HQQQLHSGNSQSVGSTGTDSSSAQNTMSQMELVSPASSA. Residues 220–264 enclose the bZIP domain; sequence DAKTERRLAQNREAARKSRLRKKAYVQQLETSRIRLQQVEHELQR. Positions 222-242 are basic motif; it reads KTERRLAQNREAARKSRLRKK. A Nuclear localization signal motif is present at residues 224–231; sequence ERRLAQNR. The segment at 248 to 262 is leucine-zipper; sequence LETSRIRLQQVEHEL. The 215-residue stretch at 285 to 499 folds into the DOG1 domain; that stretch reads AAMFDMEYAR…RALSNLWASR (215 aa).

Belongs to the bZIP family. In terms of assembly, binds DNA as a dimer. Expression in meristem/developing ligule regions.

The protein localises to the nucleus. Functionally, required for the formation of the blade-sheath boundary in leaves. Promotes flowering. In Zea mays (Maize), this protein is Transcription factor LG2.